A 386-amino-acid polypeptide reads, in one-letter code: Mannitol-1-phosphate 5-dehydrogenase (386 aa).

4–15 (AIHFGGGNIGRG) contacts NAD(+). The active site involves K211.

This sequence belongs to the mannitol dehydrogenase family. In terms of assembly, monomer.

The catalysed reaction is D-mannitol 1-phosphate + NAD(+) = beta-D-fructose 6-phosphate + NADH + H(+). Catalyzes the NAD(H)-dependent interconversion of D-fructose 6-phosphate and D-mannitol 1-phosphate in the mannitol metabolic pathway. In Emericella nidulans (strain FGSC A4 / ATCC 38163 / CBS 112.46 / NRRL 194 / M139) (Aspergillus nidulans), this protein is Mannitol-1-phosphate 5-dehydrogenase (mpdA).